An 832-amino-acid polypeptide reads, in one-letter code: Receptor-interacting serine/threonine-protein kinase 4 (832 aa).

Residues 22-286 (FTGWEKVGSG…QGNGLNGELI (265 aa)) form the Protein kinase domain. ATP is bound by residues 28–36 (VGSGGFGQV) and lysine 51. Lysine 51 is covalently cross-linked (Glycyl lysine isopeptide (Lys-Gly) (interchain with G-Cter in ubiquitin)). The Proton acceptor role is filled by aspartate 143. Lysine 145 is covalently cross-linked (Glycyl lysine isopeptide (Lys-Gly) (interchain with G-Cter in ubiquitin)). 2 disordered regions span residues 325–368 (QEIT…RLKR) and 389–424 (SGVSQAVEGPEELSRSSSESKLPSSGSGKRLSGVSS). Positions 329–342 (SETEDLCEKPDDEV) are enriched in acidic residues. A compositionally biased stretch (basic and acidic residues) spans 343 to 359 (KETAHDLDVKSPPEPRS). Low complexity predominate over residues 403–424 (RSSSESKLPSSGSGKRLSGVSS). ANK repeat units follow at residues 485–514 (SGASLLHLAVEAGQEECAKWLLLNNANPNL), 518–547 (RGSTPLHMAVERRVRGVVELLLARKISVNA), 551–580 (DQWTALHFAAQNGDESSTRLLLEKNASVNE), 584–613 (EGRTPMHVACQHGQENIVRILLRRGVDVSL), 617–647 (DAWLPLHYAAWQGHLPIVKLLAKQPGVSVNA), 651–680 (DGRTPLHLAAQRGHYRVARILIDLCSDVNV), 684–713 (LAQTPLHVAAETGHTSTARLLLHRGAGKEA), 717–746 (DGYTALHLAARNGHLATVKLLVEEKADVLA), 750–780 (LNQTALHLAAAHGHSEVVEELVSADVIDLFD), and 782–811 (QGLSALHLAAQGRHAQTVETLLRHGAHINL).

This sequence belongs to the protein kinase superfamily. TKL Ser/Thr protein kinase family. As to quaternary structure, interacts with PRKCB. Interacts with TRAF1, TRAF2, TRAF3 and TRAF5. Interacts with BIRC2/c-IAP1, BIRC3/c-IAP2 and XIAP/BIRC4. In terms of processing, may be phosphorylated by MAP3K2 and MAP3K3. Proteolytically cleaved by during Fas-induced apoptosis. Cleavage at Asp-388 and Asp-426. Post-translationally, polyubiquitinated with 'Lys-48' and 'Lys-63'-linked chains by BIRC2/c-IAP1 and BIRC3/c-IAP2, leading to activation of NF-kappa-B. Expressed in hair follicles and skin.

The protein localises to the cytoplasm. It localises to the membrane. It carries out the reaction L-seryl-[protein] + ATP = O-phospho-L-seryl-[protein] + ADP + H(+). It catalyses the reaction L-threonyl-[protein] + ATP = O-phospho-L-threonyl-[protein] + ADP + H(+). Serine/threonine protein kinase. Required for embryonic skin development and correct skin homeostasis in adults, via phosphorylation of PKP1 and subsequent promotion of keratinocyte differentiation and cell adhesion. It is a direct transcriptional target of TP63. Plays a role in NF-kappa-B activation. The protein is Receptor-interacting serine/threonine-protein kinase 4 (RIPK4) of Homo sapiens (Human).